A 316-amino-acid chain; its full sequence is Phospholipase A1 4 (316 aa).

Residues 1-4 form the signal peptide; sequence ADDL. Positions 5-14 are excised as a propeptide; sequence TTLRNGTLDR. Residues cysteine 20 and cysteine 103 are joined by a disulfide bond. Residue serine 153 is the Nucleophile of the active site. Aspartate 181 (charge relay system) is an active-site residue. 2 cysteine pairs are disulfide-bonded: cysteine 192–cysteine 197 and cysteine 235–cysteine 240. Residue histidine 242 is the Charge relay system of the active site. 3 cysteine pairs are disulfide-bonded: cysteine 257–cysteine 284, cysteine 258–cysteine 309, and cysteine 277–cysteine 282.

It belongs to the AB hydrolase superfamily. Lipase family. Expressed by the venom gland.

It localises to the secreted. It carries out the reaction a 1,2-diacyl-sn-glycero-3-phosphocholine + H2O = a 2-acyl-sn-glycero-3-phosphocholine + a fatty acid + H(+). Its function is as follows. Catalyzes the hydrolysis of phosphatidylcholine with phospholipase A1 activity. May act as an allergen and induce hemolytic activity. The protein is Phospholipase A1 4 of Polistes dominula (European paper wasp).